The following is a 37-amino-acid chain: Cytochrome b6-f complex subunit 5 (37 aa).

Residues 5–25 (LLCGIVLGLIPITLAGLFMAA) traverse the membrane as a helical segment.

Belongs to the PetG family. In terms of assembly, the 4 large subunits of the cytochrome b6-f complex are cytochrome b6, subunit IV (17 kDa polypeptide, PetD), cytochrome f and the Rieske protein, while the 4 small subunits are PetG, PetL, PetM and PetN. The complex functions as a dimer.

It is found in the cellular thylakoid membrane. Component of the cytochrome b6-f complex, which mediates electron transfer between photosystem II (PSII) and photosystem I (PSI), cyclic electron flow around PSI, and state transitions. PetG is required for either the stability or assembly of the cytochrome b6-f complex. This chain is Cytochrome b6-f complex subunit 5, found in Synechococcus elongatus (strain ATCC 33912 / PCC 7942 / FACHB-805) (Anacystis nidulans R2).